The chain runs to 240 residues: Triosephosphate isomerase (240 aa).

9–11 (NWK) provides a ligand contact to substrate. Catalysis depends on H94, which acts as the Electrophile. E163 acts as the Proton acceptor in catalysis. Residues G169, S202, and 223–224 (GG) contribute to the substrate site.

Belongs to the triosephosphate isomerase family. As to quaternary structure, homodimer.

It localises to the cytoplasm. The enzyme catalyses D-glyceraldehyde 3-phosphate = dihydroxyacetone phosphate. The protein operates within carbohydrate biosynthesis; gluconeogenesis. It participates in carbohydrate degradation; glycolysis; D-glyceraldehyde 3-phosphate from glycerone phosphate: step 1/1. Functionally, involved in the gluconeogenesis. Catalyzes stereospecifically the conversion of dihydroxyacetone phosphate (DHAP) to D-glyceraldehyde-3-phosphate (G3P). The protein is Triosephosphate isomerase of Gloeobacter violaceus (strain ATCC 29082 / PCC 7421).